The following is a 227-amino-acid chain: A-type potassium channel modulatory protein KCNIP1 (227 aa).

In terms of domain architecture, EF-hand 1; degenerate spans 38-94; it reads LEMTMVCHRPEGLEQLEAQTNFTKRELQVLYRGFKNECPSGVVNEETFKQIYAQFFP. EF-hand domains lie at 97–132, 133–168, and 181–216; these read DAST…LLRG, TVHE…IYDM, and TPRQ…DDNI. Ca(2+)-binding residues include D146, N148, D150, Y152, E157, D194, N196, D198, and E205. Positions 214–227 are interaction with KCND2; that stretch reads DNIMRSLQLFQNVM.

It belongs to the recoverin family. In terms of assembly, component of heteromultimeric potassium channels. Identified in potassium channel complexes containing KCND1, KCND2, KCND3, KCNIP1, KCNIP2, KCNIP3, KCNIP4, DPP6 and DPP10. Part of a heterooctamer composed of the tetrameric channel and four KCNIP1 chains. Probably part of a complex consisting of KCNIP1, KCNIP2 isoform 3 and KCND2. Self-associates to form homodimers and homotetramers. Interacts with KCNIP2 isoform 3 in a calcium-dependent manner. Interacts with KCND2; this interaction mediates the capture of both the N- and C-terminus of KCND2, thus preventing KCND2 N-type inactivation and modulates the channel gating kinetics. Interacts with KCND3; each KCNIP1 monomer interacts with two adjacent KCND3 subunits, through both the N-terminal inactivation ball of a KCND3 subunit and a C-terminal helix from the adjacent KCND3 subunit, clamping them together; this interaction stabilizes the tetrameric form and modulates the channel gating kinetics namely channel activation and inactivation kinetics and rate of recovery from inactivation. As to expression, expressed in brain. Found in a subpopulation of neurons widely distributed and enriched in Purkinje cells of the cerebellum and in the reticular thalamic and medial habenular nuclei.

It is found in the cell membrane. Its subcellular location is the cytoplasm. The protein localises to the cell projection. It localises to the dendrite. Functionally, regulatory subunit of Kv4/D (Shal)-type voltage-gated rapidly inactivating A-type potassium channels. Regulates channel density, inactivation kinetics and rate of recovery from inactivation in a calcium-dependent and isoform-specific manner. Modulates KCND2/Kv4.2 currents. In vitro, modulates KCND1/Kv4.1 currents. Increases the presence of KCND2 at the cell surface. The polypeptide is A-type potassium channel modulatory protein KCNIP1 (Mus musculus (Mouse)).